Consider the following 100-residue polypeptide: Large ribosomal subunit protein uL23 (100 aa).

This sequence belongs to the universal ribosomal protein uL23 family. As to quaternary structure, part of the 50S ribosomal subunit. Contacts protein L29, and trigger factor when it is bound to the ribosome.

Functionally, one of the early assembly proteins it binds 23S rRNA. One of the proteins that surrounds the polypeptide exit tunnel on the outside of the ribosome. Forms the main docking site for trigger factor binding to the ribosome. In Colwellia psychrerythraea (strain 34H / ATCC BAA-681) (Vibrio psychroerythus), this protein is Large ribosomal subunit protein uL23.